The sequence spans 401 residues: E3 ubiquitin-protein ligase DA2 (401 aa).

The RING-type; degenerate zinc finger occupies 59–102 (CPICFLYYPSLNRSRCCMKSICTECFLQMKNPNSARPTQCPFCK). Residues 139–153 (KEMQDDEEKMQKRLE) show a composition bias toward basic and acidic residues. The interval 139 to 164 (KEMQDDEEKMQKRLESCSSSTSAMTG) is disordered.

As to quaternary structure, interacts with DA1 (via C-terminus).

The catalysed reaction is S-ubiquitinyl-[E2 ubiquitin-conjugating enzyme]-L-cysteine + [acceptor protein]-L-lysine = [E2 ubiquitin-conjugating enzyme]-L-cysteine + N(6)-ubiquitinyl-[acceptor protein]-L-lysine.. It participates in protein modification; protein ubiquitination. In terms of biological role, E3 ubiquitin-protein ligase involved in the regulation of organ and seed size. Acts synergistically with DA1 to regulate seed size. Functions synergistically with DA1 to restrict cell proliferation in the maternal integuments of ovules and developing seeds. Seems to function independently of BB. Possesses E3 ubiquitin-protein ligase activity in vitro. Polyubiquitinates DA1, DAR1 and DAR2, but not DAR3. The chain is E3 ubiquitin-protein ligase DA2 from Arabidopsis thaliana (Mouse-ear cress).